The sequence spans 603 residues: MAKHIVELTDALSNKIAAGEVVERPASVVKELVENAIDAGSTVIDILVEEAGLNKITIIDNGSGIEEEDVATAFLRHATSKIKNEADLFRVHTLGFRGEALPSIASVSHLSMETSTGETKGTTITLEGGKIIEQKSGHARKGTQIEVSQLFFNTPARLKYLKSLPTELGNITDILNRLALAHPDISFRFSHNGKPLLQTNGNGDLRQVIAAIYGVSIARKSIPVKAESLDFKISGYAVLPEVNRSNRNYISTIINGRFIKNFALVKAIQEGYHTLLPIGRFPIIVLQIEMDPIIVDVNVHPAKLEVRLSKEKELGQLISQMIKEAFHKLQLIPDGEISKKQKEVQKSEQIQMSFEENKPQKETPTLFSKSSIPEYVPSDLDAPREDDFILETMPSYEPEQEVEHAEQPKERIPKMYPIGQMHATYIFAQNENGLYIIDQHAAQERIKYEFYREKIGEVSRELQELLVPIVLEFPADEYVRLEEQKAKLEEVGVFLENFGQNSFIIRAHPTWFPKDQEEEMLREIIDEALSAPSISIHKLREDTAIMMSCKKSIKANHYLTTQDMEALLDTLREASDPFTCPHGRPVIIQYSTYELEKMFKRVM.

This sequence belongs to the DNA mismatch repair MutL/HexB family.

This protein is involved in the repair of mismatches in DNA. It is required for dam-dependent methyl-directed DNA mismatch repair. May act as a 'molecular matchmaker', a protein that promotes the formation of a stable complex between two or more DNA-binding proteins in an ATP-dependent manner without itself being part of a final effector complex. The protein is DNA mismatch repair protein MutL of Listeria monocytogenes serotype 4a (strain HCC23).